A 100-amino-acid chain; its full sequence is Urease subunit gamma (100 aa).

The protein belongs to the urease gamma subunit family. Heterotrimer of UreA (gamma), UreB (beta) and UreC (alpha) subunits. Three heterotrimers associate to form the active enzyme.

The protein resides in the cytoplasm. It catalyses the reaction urea + 2 H2O + H(+) = hydrogencarbonate + 2 NH4(+). It participates in nitrogen metabolism; urea degradation; CO(2) and NH(3) from urea (urease route): step 1/1. The sequence is that of Urease subunit gamma from Roseobacter denitrificans (strain ATCC 33942 / OCh 114) (Erythrobacter sp. (strain OCh 114)).